The following is an 82-amino-acid chain: Chaperone protein DnaJ 1 (82 aa).

Residues 1–33 (YHLGGPPVTLKLPPGTPAGRTMRARGKGAVRKD) are disordered.

The protein belongs to the DnaJ family. As to quaternary structure, homodimer. Zn(2+) serves as cofactor.

Its subcellular location is the cytoplasm. Functionally, participates actively in the response to hyperosmotic and heat shock by preventing the aggregation of stress-denatured proteins and by disaggregating proteins, also in an autonomous, DnaK-independent fashion. Unfolded proteins bind initially to DnaJ; upon interaction with the DnaJ-bound protein, DnaK hydrolyzes its bound ATP, resulting in the formation of a stable complex. GrpE releases ADP from DnaK; ATP binding to DnaK triggers the release of the substrate protein, thus completing the reaction cycle. Several rounds of ATP-dependent interactions between DnaJ, DnaK and GrpE are required for fully efficient folding. Also involved, together with DnaK and GrpE, in the DNA replication of plasmids through activation of initiation proteins. The chain is Chaperone protein DnaJ 1 (dnaJ1) from Streptomyces albus G.